We begin with the raw amino-acid sequence, 326 residues long: MDQAKGKVCVTGASGFLASWLVKRLLLEGYEVIGTVRDPGNEKKLAHLWKLEGAKERLRLVKADLMEEGSFDNAIMGCQGVFHTASPVLKPTSNPEEEILRPAIEGTLNVLRSCRKNPSLKRVVLTSSSSTVRIRDDFDPKIPLDESIWTSVELCKRFQVWYALSKTLAEQAAWKFSEENGIDLVTVLPSFLVGPSLPPDLCSTASDVLGLLKGETEKFQWHGQMGYVHIDDVARTHIVVFEHEAAQGRYICSSNVISLEELVSFLSARYPSLPIPKRFEKLNRLHYDFDTSKIQSLGLKFKSLEEMFDDCIASLVEQGYLSTVLP.

Residues 8–32 (VCVTGASGFLASWLVKRLLLEGYEV), K44, and Y162 contribute to the NADP(+) site.

This sequence belongs to the NAD(P)-dependent epimerase/dehydratase family. Dihydroflavonol-4-reductase subfamily. Interacts with 4CLL1/ACOS5, PKSA and PKSB. As to expression, specifically expressed in anther tapetal cells during microspores development.

It localises to the cytoplasm. The protein resides in the nucleus. The protein localises to the endoplasmic reticulum. Involved in the biosynthesis of hydroxylated tetraketide compounds that serve as sporopollenin precursors (the main constituents of exine). Is essential for pollen wall development. Acts on tetraketide alpha-pyrones and reduces the carbonyl function on the tetraketide alkyl chain to a secondary alcohol function. The chain is Tetraketide alpha-pyrone reductase 1 (TKPR1) from Arabidopsis thaliana (Mouse-ear cress).